The following is a 1233-amino-acid chain: Reverse gyrase 2 (1233 aa).

Residues 1–41 (MNTIPSSNYLSSCPNCGRVISAERLYKGSVCSECLEEDREF) form an RG N-terminal-type zinc finger. Zn(2+)-binding residues include C13, C16, C31, and C34. ATP contacts are provided by residues Q89 and 106 to 113 (APPGLGKT). Residues 93-296 (IIRVLRKESF…ALMGFRPGSS (204 aa)) enclose the Helicase ATP-binding domain. The short motif at 212–215 (DDVD) is the DEAD box element. The tract at residues 606-1233 (QKVKTVLFIV…DIYYEIKSIR (628 aa)) is topoisomerase I. Residues 610 to 774 (TVLFIVESPN…NIKRAEFHEV (165 aa)) form the Toprim domain. Residue E616 participates in Mg(2+) binding. The segment at 691–720 (IKKCINGHQFTDFEQGNQCPKCHTTQIILD) adopts an RG C-terminal-type; atypical zinc-finger fold. Residues C694, H698, C709, and C712 each contribute to the Zn(2+) site. D743 contacts Mg(2+). Residues 790 to 1233 (NVNLVKSQIV…DIYYEIKSIR (444 aa)) enclose the Topo IA-type catalytic domain. Residue Y947 is the O-(5'-phospho-DNA)-tyrosine intermediate of the active site.

This sequence in the N-terminal section; belongs to the DEAD box helicase family. DDVD subfamily. In the C-terminal section; belongs to the type IA topoisomerase family. In terms of assembly, monomer. Zn(2+) is required as a cofactor. The cofactor is Mg(2+).

The protein resides in the cytoplasm. It carries out the reaction ATP + H2O = ADP + phosphate + H(+). Its function is as follows. Modifies the topological state of DNA by introducing positive supercoils in an ATP-dependent process, increasing the linking number in steps of +1. Binds to single-stranded DNA, transiently cleaves and then rejoins the ends, introducing a positive supercoil in the process. The scissile phosphodiester is attacked by the catalytic tyrosine of the enzyme, resulting in the formation of a DNA-(5'-phosphotyrosyl)-enzyme intermediate. Probably involved in rewinding DNA strands in regions of the chromosome that have opened up to allow replication, transcription, DNA repair and/or for DNA protection. The polypeptide is Reverse gyrase 2 (Sulfurisphaera tokodaii (strain DSM 16993 / JCM 10545 / NBRC 100140 / 7) (Sulfolobus tokodaii)).